The chain runs to 215 residues: 3-isopropylmalate dehydratase small subunit (215 aa).

Belongs to the LeuD family. LeuD type 1 subfamily. Heterodimer of LeuC and LeuD.

The enzyme catalyses (2R,3S)-3-isopropylmalate = (2S)-2-isopropylmalate. It participates in amino-acid biosynthesis; L-leucine biosynthesis; L-leucine from 3-methyl-2-oxobutanoate: step 2/4. Functionally, catalyzes the isomerization between 2-isopropylmalate and 3-isopropylmalate, via the formation of 2-isopropylmaleate. The sequence is that of 3-isopropylmalate dehydratase small subunit from Xanthomonas campestris pv. campestris (strain 8004).